Consider the following 190-residue polypeptide: Elongation factor P-like protein (190 aa).

The protein belongs to the elongation factor P family.

The polypeptide is Elongation factor P-like protein (Yersinia enterocolitica serotype O:8 / biotype 1B (strain NCTC 13174 / 8081)).